The chain runs to 338 residues: Eukaryotic translation initiation factor 3 subunit H (338 aa).

The MPN domain occupies 22-154; it reads VQCDGLAVMK…LKAYRLTPQA (133 aa).

The protein belongs to the eIF-3 subunit H family. Component of the eukaryotic translation initiation factor 3 (eIF-3) complex. The eIF-3 complex interacts with pix. Interacts with mxt.

The protein resides in the cytoplasm. Functionally, component of the eukaryotic translation initiation factor 3 (eIF-3) complex, which is involved in protein synthesis of a specialized repertoire of mRNAs and, together with other initiation factors, stimulates binding of mRNA and methionyl-tRNAi to the 40S ribosome. The eIF-3 complex specifically targets and initiates translation of a subset of mRNAs involved in cell proliferation. This is Eukaryotic translation initiation factor 3 subunit H from Drosophila yakuba (Fruit fly).